The following is a 245-amino-acid chain: Phosducin (245 aa).

The disordered stretch occupies residues 1 to 67 (MEEARRQSLE…SRDDKDSKER (67 aa)). A Phosducin domain is found at 1–241 (MEEARRQSLE…IHALEQTSME (241 aa)). Residues 58–67 (SRDDKDSKER) are compositionally biased toward basic and acidic residues. S73 carries the phosphoserine; by PKA modification. Residues 111–245 (YGFVYELETG…EQTSMEEDVE (135 aa)) are thioredoxin fold.

It belongs to the phosducin family. In terms of assembly, forms a complex with the beta and gamma subunits of the GTP-binding protein, transducin. Interacts with CRX. Light-induced changes in cyclic nucleotide levels modulate the phosphorylation of this protein by cAMP kinase.

The protein resides in the cytoplasm. The protein localises to the cytosol. Its subcellular location is the nucleus. It localises to the cell projection. It is found in the cilium. The protein resides in the photoreceptor outer segment. The protein localises to the photoreceptor inner segment. Functionally, may participate in the regulation of visual phototransduction or in the integration of photoreceptor metabolism. Inhibits the transcriptional activation activity of the cone-rod homeobox CRX. This chain is Phosducin (PDC), found in Equus caballus (Horse).